We begin with the raw amino-acid sequence, 411 residues long: Bifunctional protein GlmU (411 aa).

The interval 1-204 (MDAIILCAGK…NGKLHGVELK (204 aa)) is pyrophosphorylase. UTP contacts are provided by residues 6-9 (LCAG), glutamine 74, and glycine 79. N-acetyl-alpha-D-glucosamine 1-phosphate contacts are provided by threonine 80, glycine 130, asparagine 142, and asparagine 158. Residues 205-224 (GYWNDIGHPWDVLSANNHFL) are linker. The segment at 225 to 411 (NKIISKVSGK…DELVITKKRN (187 aa)) is N-acetyltransferase. The active-site Proton acceptor is the histidine 308. Acetyl-CoA is bound by residues alanine 384 and lysine 401.

In the N-terminal section; belongs to the N-acetylglucosamine-1-phosphate uridyltransferase family. This sequence in the C-terminal section; belongs to the transferase hexapeptide repeat family.

It catalyses the reaction N-acetyl-alpha-D-glucosamine 1-phosphate + UTP + H(+) = UDP-N-acetyl-alpha-D-glucosamine + diphosphate. The catalysed reaction is alpha-D-glucosamine 1-phosphate + acetyl-CoA = N-acetyl-alpha-D-glucosamine 1-phosphate + CoA + H(+). Its pathway is nucleotide-sugar biosynthesis; UDP-N-acetyl-alpha-D-glucosamine biosynthesis; N-acetyl-alpha-D-glucosamine 1-phosphate from alpha-D-glucosamine 6-phosphate (route II): step 2/2. It participates in nucleotide-sugar biosynthesis; UDP-N-acetyl-alpha-D-glucosamine biosynthesis; UDP-N-acetyl-alpha-D-glucosamine from N-acetyl-alpha-D-glucosamine 1-phosphate: step 1/1. Catalyzes the last two sequential reactions in the de novo biosynthetic pathway for UDP-N-acetyl-glucosamine (UDP-GlcNAc). Responsible for the acetylation of GlcN-1-P to GlcNAc-1-P, and for the uridyl transfer from UTP to GlcNAc-1-P, to produce UDP-GlcNAc and pyrophosphate. The chain is Bifunctional protein GlmU from Methanococcus maripaludis (strain DSM 14266 / JCM 13030 / NBRC 101832 / S2 / LL).